The primary structure comprises 156 residues: ATP synthase subunit b (156 aa).

The chain crosses the membrane as a helical span at residues 7 to 29 (LFAQMVVFLVLAWFTMKFVWPPL).

Belongs to the ATPase B chain family. As to quaternary structure, F-type ATPases have 2 components, F(1) - the catalytic core - and F(0) - the membrane proton channel. F(1) has five subunits: alpha(3), beta(3), gamma(1), delta(1), epsilon(1). F(0) has three main subunits: a(1), b(2) and c(10-14). The alpha and beta chains form an alternating ring which encloses part of the gamma chain. F(1) is attached to F(0) by a central stalk formed by the gamma and epsilon chains, while a peripheral stalk is formed by the delta and b chains.

Its subcellular location is the cell inner membrane. In terms of biological role, f(1)F(0) ATP synthase produces ATP from ADP in the presence of a proton or sodium gradient. F-type ATPases consist of two structural domains, F(1) containing the extramembraneous catalytic core and F(0) containing the membrane proton channel, linked together by a central stalk and a peripheral stalk. During catalysis, ATP synthesis in the catalytic domain of F(1) is coupled via a rotary mechanism of the central stalk subunits to proton translocation. Component of the F(0) channel, it forms part of the peripheral stalk, linking F(1) to F(0). In Burkholderia vietnamiensis (strain G4 / LMG 22486) (Burkholderia cepacia (strain R1808)), this protein is ATP synthase subunit b.